We begin with the raw amino-acid sequence, 168 residues long: Transcription antitermination protein NusB (168 aa).

It belongs to the NusB family.

Involved in transcription antitermination. Required for transcription of ribosomal RNA (rRNA) genes. Binds specifically to the boxA antiterminator sequence of the ribosomal RNA (rrn) operons. This chain is Transcription antitermination protein NusB, found in Chlamydia trachomatis serovar D (strain ATCC VR-885 / DSM 19411 / UW-3/Cx).